The chain runs to 545 residues: Inosine-5'-monophosphate dehydrogenase (545 aa).

2 consecutive CBS domains span residues 138-194 (MITD…DYDT) and 201-258 (MTKE…PDAT). Residues aspartate 295 and 347 to 349 (GIG) each bind NAD(+). The K(+) site is built by glycine 349 and glycine 351. Serine 352 is a binding site for IMP. Position 354 (cysteine 354) interacts with K(+). Catalysis depends on cysteine 354, which acts as the Thioimidate intermediate. Residues 387 to 389 (DGG), 410 to 411 (GG), and 434 to 438 (YRGMG) each bind IMP. Arginine 455 (proton acceptor) is an active-site residue. An IMP-binding site is contributed by glutamate 470. K(+) contacts are provided by glutamate 524, serine 525, and histidine 526.

This sequence belongs to the IMPDH/GMPR family. As to quaternary structure, homotetramer. It depends on K(+) as a cofactor.

The catalysed reaction is IMP + NAD(+) + H2O = XMP + NADH + H(+). Its pathway is purine metabolism; XMP biosynthesis via de novo pathway; XMP from IMP: step 1/1. With respect to regulation, mycophenolic acid (MPA) is a non-competitive inhibitor that prevents formation of the closed enzyme conformation by binding to the same site as the amobile flap. In contrast, mizoribine monophosphate (MZP) is a competitive inhibitor that induces the closed conformation. MPA is a potent inhibitor of mammalian IMPDHs but a poor inhibitor of the bacterial enzymes. MZP is a more potent inhibitor of bacterial IMPDH. In terms of biological role, catalyzes the conversion of inosine 5'-phosphate (IMP) to xanthosine 5'-phosphate (XMP), the first committed and rate-limiting step in the de novo synthesis of guanine nucleotides, and therefore plays an important role in the regulation of cell growth. The polypeptide is Inosine-5'-monophosphate dehydrogenase (Bifidobacterium longum (strain NCC 2705)).